A 490-amino-acid polypeptide reads, in one-letter code: ATP synthase subunit beta, chloroplastic (490 aa).

Residue 170 to 177 (GGAGVGKT) coordinates ATP.

It belongs to the ATPase alpha/beta chains family. F-type ATPases have 2 components, CF(1) - the catalytic core - and CF(0) - the membrane proton channel. CF(1) has five subunits: alpha(3), beta(3), gamma(1), delta(1), epsilon(1). CF(0) has four main subunits: a(1), b(1), b'(1) and c(9-12).

The protein resides in the plastid. It localises to the chloroplast thylakoid membrane. It catalyses the reaction ATP + H2O + 4 H(+)(in) = ADP + phosphate + 5 H(+)(out). Its function is as follows. Produces ATP from ADP in the presence of a proton gradient across the membrane. The catalytic sites are hosted primarily by the beta subunits. The protein is ATP synthase subunit beta, chloroplastic of Ipomoea setosa (Brazilian morning glory).